A 354-amino-acid polypeptide reads, in one-letter code: Ornithine cyclodeaminase (354 aa).

L-ornithine is bound by residues Arg53 and Lys77. Residues Thr92, Arg120, Ala147 to Gln148, Asp169, Thr209, Val232 to Asp235, Lys239, and Ser300 each bind NAD(+). Arg120 contributes to the L-ornithine binding site. L-ornithine is bound at residue Asp235. Asp235 acts as the Proton donor/acceptor in catalysis. Val301 is a binding site for L-ornithine.

The protein belongs to the ornithine cyclodeaminase/mu-crystallin family. NAD(+) serves as cofactor.

The catalysed reaction is L-ornithine = L-proline + NH4(+). It functions in the pathway amino-acid biosynthesis; L-proline biosynthesis; L-proline from L-ornithine: step 1/1. With respect to regulation, is subject to substrate inhibition. Is regulated by L-arginine, which stimulates enzymatic activity at 0.1-1 mM while inhibits activity at higher concentrations, and has pronounced effects on the optima for pH and temperature and on the Km for L-ornithine. Is not inhibited by L-proline. Catalyzes the conversion of L-ornithine into L-proline with release of ammonia. Is involved in the utilization of nopaline, a catabolic pathway that proceeds through L-arginine and L-ornithine to L-proline. Nopaline is a predominant opine in plant cells transformed with Ti plasmid pTiC58. This Agrobacterium fabrum (strain C58 / ATCC 33970) (Agrobacterium tumefaciens (strain C58)) protein is Ornithine cyclodeaminase.